Consider the following 145-residue polypeptide: uncharacterized protein (145 aa).

The chain crosses the membrane as a helical span at residues 1–21 (MWFLVKATFWFSLVLVLLPFL). Positions 109 to 145 (TPAESVPSAEATEKAEPAFKRMPVPEHRLDPGPASGK) are disordered. The segment covering 119 to 138 (ATEKAEPAFKRMPVPEHRLD) has biased composition (basic and acidic residues).

The protein resides in the membrane. This is an uncharacterized protein from Rhizobium meliloti (strain 1021) (Ensifer meliloti).